We begin with the raw amino-acid sequence, 151 residues long: MSKSSEEKMENKEVLNINSFNISEFCNAEEGSNFIHFKPCEICKRAILDPINVADTSRLLQVNVALRNVCIGKELTVGCILIDRTGTVLAFKSQTFTVGHGGSGCGCSEDKHGSPCTNTSRRFSFILPTRDLCSSMDLKVKIIANYTHPCN.

It localises to the spore wall. This chain is Exosporium protein B, found in Clostridium sporogenes (strain ATCC 15579).